The chain runs to 125 residues: Large ribosomal subunit protein bL12 (125 aa).

The protein belongs to the bacterial ribosomal protein bL12 family. In terms of assembly, homodimer. Part of the ribosomal stalk of the 50S ribosomal subunit. Forms a multimeric L10(L12)X complex, where L10 forms an elongated spine to which 2 to 4 L12 dimers bind in a sequential fashion. Binds GTP-bound translation factors.

Functionally, forms part of the ribosomal stalk which helps the ribosome interact with GTP-bound translation factors. Is thus essential for accurate translation. The sequence is that of Large ribosomal subunit protein bL12 from Afipia carboxidovorans (strain ATCC 49405 / DSM 1227 / KCTC 32145 / OM5) (Oligotropha carboxidovorans).